Reading from the N-terminus, the 937-residue chain is Isoleucine--tRNA ligase (937 aa).

Residues 58 to 68 (PYANGSIHIGH) carry the 'HIGH' region motif. An L-isoleucyl-5'-AMP-binding site is contributed by glutamate 561. Residues 602 to 606 (KMSKS) carry the 'KMSKS' region motif. Lysine 605 contacts ATP. Cysteine 900, cysteine 903, cysteine 920, and cysteine 923 together coordinate Zn(2+).

Belongs to the class-I aminoacyl-tRNA synthetase family. IleS type 1 subfamily. As to quaternary structure, monomer. Zn(2+) serves as cofactor.

Its subcellular location is the cytoplasm. It carries out the reaction tRNA(Ile) + L-isoleucine + ATP = L-isoleucyl-tRNA(Ile) + AMP + diphosphate. Catalyzes the attachment of isoleucine to tRNA(Ile). As IleRS can inadvertently accommodate and process structurally similar amino acids such as valine, to avoid such errors it has two additional distinct tRNA(Ile)-dependent editing activities. One activity is designated as 'pretransfer' editing and involves the hydrolysis of activated Val-AMP. The other activity is designated 'posttransfer' editing and involves deacylation of mischarged Val-tRNA(Ile). The polypeptide is Isoleucine--tRNA ligase (Photorhabdus laumondii subsp. laumondii (strain DSM 15139 / CIP 105565 / TT01) (Photorhabdus luminescens subsp. laumondii)).